Here is a 213-residue protein sequence, read N- to C-terminus: 3-demethoxyubiquinol 3-hydroxylase (213 aa).

Glu-62, Glu-92, His-95, Glu-144, Glu-176, and His-179 together coordinate Fe cation.

Belongs to the COQ7 family. It depends on Fe cation as a cofactor.

It is found in the cell membrane. The catalysed reaction is a 5-methoxy-2-methyl-3-(all-trans-polyprenyl)benzene-1,4-diol + AH2 + O2 = a 3-demethylubiquinol + A + H2O. Its pathway is cofactor biosynthesis; ubiquinone biosynthesis. Functionally, catalyzes the hydroxylation of 2-nonaprenyl-3-methyl-6-methoxy-1,4-benzoquinol during ubiquinone biosynthesis. The polypeptide is 3-demethoxyubiquinol 3-hydroxylase (Legionella pneumophila subsp. pneumophila (strain Philadelphia 1 / ATCC 33152 / DSM 7513)).